The following is a 351-amino-acid chain: Chorismate synthase (351 aa).

The segment at 39–60 (EDIQRDLERRRPGKRLTSPRGE) is disordered. NADP(+) is bound by residues Arg48 and Arg53. FMN contacts are provided by residues 124-126 (RSS), Ala276, 291-295 (KPIPS), and Arg317.

Belongs to the chorismate synthase family. As to quaternary structure, homotetramer. It depends on FMNH2 as a cofactor.

The catalysed reaction is 5-O-(1-carboxyvinyl)-3-phosphoshikimate = chorismate + phosphate. It functions in the pathway metabolic intermediate biosynthesis; chorismate biosynthesis; chorismate from D-erythrose 4-phosphate and phosphoenolpyruvate: step 7/7. Catalyzes the anti-1,4-elimination of the C-3 phosphate and the C-6 proR hydrogen from 5-enolpyruvylshikimate-3-phosphate (EPSP) to yield chorismate, which is the branch point compound that serves as the starting substrate for the three terminal pathways of aromatic amino acid biosynthesis. This reaction introduces a second double bond into the aromatic ring system. The chain is Chorismate synthase from Syntrophobacter fumaroxidans (strain DSM 10017 / MPOB).